Here is a 130-residue protein sequence, read N- to C-terminus: Splicing regulatory small protein (130 aa).

Positions 1–10 (MRTKPQRPRA) are enriched in basic residues. Disordered regions lie at residues 1–29 (MRTKPQRPRATRSYLGQPCGSPRRTEETG) and 74–130 (GRAL…STRR). Residues 16 to 22 (GQPCGSP) form a mediates interaction with SRSF3 region. The span at 77-98 (LEPKADPHTCPYGRKESRGEKV) shows a compositional bias: basic and acidic residues. Residues 120-130 (SLKSGSPSTRR) are compositionally biased toward polar residues.

Interacts with SRSF3; increases SRSF3 binding to specific exons.

It is found in the nucleus. Functionally, interacts with the splicing factor SRSF3 and increases its binding to specific exons within pre-mRNA, thereby regulating exon-inclusion during alternative splicing. Does not directly bind pre-mRNA and could regulate a wider range of splicing factors through a similar mechanism. This chain is Splicing regulatory small protein, found in Homo sapiens (Human).